The following is a 227-amino-acid chain: tRNA (guanine-N(7)-)-methyltransferase (227 aa).

A disordered region spans residues 1-21; sequence MPDMTMKSQPDRLYGRQRGHA. Residues Glu54, Glu79, Asp114, and Asp136 each coordinate S-adenosyl-L-methionine. Asp136 is a catalytic residue. Residues Lys140, Asp172, and 206–209 contribute to the substrate site; that span reads TRYE.

The protein belongs to the class I-like SAM-binding methyltransferase superfamily. TrmB family.

It catalyses the reaction guanosine(46) in tRNA + S-adenosyl-L-methionine = N(7)-methylguanosine(46) in tRNA + S-adenosyl-L-homocysteine. Its pathway is tRNA modification; N(7)-methylguanine-tRNA biosynthesis. In terms of biological role, catalyzes the formation of N(7)-methylguanine at position 46 (m7G46) in tRNA. In Granulibacter bethesdensis (strain ATCC BAA-1260 / CGDNIH1), this protein is tRNA (guanine-N(7)-)-methyltransferase.